The following is a 786-amino-acid chain: Pheromone-regulated membrane protein 10 (786 aa).

Residues 1–28 (MADSGDKDVSKSVRFDKESIESKKRSSV) are compositionally biased toward basic and acidic residues. 2 disordered regions span residues 1–65 (MADS…EDGN) and 77–103 (NGGAGLAPGLSKANSNQEKTDLEDNDN). The segment covering 29-42 (DDSASSYSSSSSGQ) has biased composition (low complexity). 10 consecutive transmembrane segments (helical) span residues 469-489 (WVCVFLYGFCSAMVTPYAFGG), 491-511 (WINLAITFFMGSCVGMMQFIL), 521-541 (VFEITASIVVSFCGRAFGSIP), 545-565 (ICFGAITQGSLALILPGYIIL), 584-604 (FYAIIYSLFLGFGITLGAALF), 620-640 (PISPWFRFLFVPAFTIGISLI), 645-665 (WTQLPAMVFISCTGYVVTYWS), 675-695 (FTAALASFVIGILGNLYSRIW), 697-717 (GLAVSAMLPAIFVQVPSGIAS), and 751-771 (FGITMIEVSIGISVGLFASTL).

The protein belongs to the ThrE exporter (TC 2.A.79) family.

It localises to the membrane. This chain is Pheromone-regulated membrane protein 10, found in Candida glabrata (strain ATCC 2001 / BCRC 20586 / JCM 3761 / NBRC 0622 / NRRL Y-65 / CBS 138) (Yeast).